Here is a 327-residue protein sequence, read N- to C-terminus: Protein EMSY-LIKE 1 (327 aa).

The ENT domain occupies 1–88; the sequence is METQIHQLEQ…HATIQPFDVL (88 aa). Residues 32–58 are a coiled coil; it reads ESLITELRKELRVSDDEHRELLSRVNK. Disordered stretches follow at residues 206 to 257 and 305 to 327; these read GHGS…SDDI and ADTS…MPQG. The span at 214–232 shows a compositional bias: basic residues; sequence GNRRGQIHGGRGRGPRIHQ. Residues 281-306 adopt a coiled-coil conformation; that stretch reads LELDKAKKMLKEHEQALIAAIARLAD. Residue Ser308 is modified to Phosphoserine. The span at 318–327 shows a compositional bias: basic and acidic residues; it reads YSHDHPMPQG.

As to quaternary structure, isoform 1 interacts with EDM2 in nucleus.

The protein resides in the nucleus. In terms of biological role, probably involved in the regulation of chromatin states. Contributes to RPP7-mediated and basal immunity, especially against Hyaloperonospora arabidopsidis isolate Hiks1. Regulates negatively EDM2-dependent floral transition. The protein is Protein EMSY-LIKE 1 of Arabidopsis thaliana (Mouse-ear cress).